We begin with the raw amino-acid sequence, 526 residues long: Putative UDP-glucuronosyltransferase ugt-48 (526 aa).

The signal sequence occupies residues 1–17 (MLLRILTFLAVCQVTTS). 2 N-linked (GlcNAc...) asparagine glycosylation sites follow: N58 and N305. The helical transmembrane segment at 489 to 509 (FYNLDIIITAASIPVLIFIVL) threads the bilayer. N513 carries N-linked (GlcNAc...) asparagine glycosylation.

This sequence belongs to the UDP-glycosyltransferase family. In terms of assembly, interacts with cmd-1 in the presence of Ca(2+).

It is found in the membrane. It carries out the reaction glucuronate acceptor + UDP-alpha-D-glucuronate = acceptor beta-D-glucuronoside + UDP + H(+). This chain is Putative UDP-glucuronosyltransferase ugt-48 (ugt-48), found in Caenorhabditis elegans.